The sequence spans 348 residues: Rhodopsin (348 aa).

Position 1 is an N-acetylmethionine (Met1). At 1–36 the chain is on the extracellular side; it reads MNGTEGPNFYVPFSNKTGVVRSPFEYPQYYLAEPWQ. N-linked (GlcNAc...) asparagine glycans are attached at residues Asn2 and Asn15. A helical membrane pass occupies residues 37–61; that stretch reads FSMLAAYMFLLIVLGFPINFLTLYV. At 62–73 the chain is on the cytoplasmic side; sequence TVQHKNVRTPLN. Residues 74–96 traverse the membrane as a helical segment; it reads YILLNLAVANHFMVFGGFTTTLY. Residues 97–110 lie on the Extracellular side of the membrane; it reads TSLHGYFVFGSTGC. Residues Cys110 and Cys187 are joined by a disulfide bond. A helical membrane pass occupies residues 111 to 133; it reads NLEGFFATLGGEIALWSLVVLAI. Positions 134-136 match the 'Ionic lock' involved in activated form stabilization motif; that stretch reads ERY. Residues 134–152 are Cytoplasmic-facing; the sequence is ERYVVVCKPMSNFRFGENH. The chain crosses the membrane as a helical span at residues 153-173; the sequence is AIMGVAFTWVMALACAAPPLV. Over 174–202 the chain is Extracellular; it reads GWSRYIPEGMQCSCGIDYYTLKPEVNNES. Glu201 contacts Zn(2+). A helical membrane pass occupies residues 203-224; sequence FVIYMFVVHFTIPMTIIFFCYG. At 225–252 the chain is on the cytoplasmic side; the sequence is QLVFTVKEAAAQQQESATTQKAEKEVTR. Residues 253-274 form a helical membrane-spanning segment; that stretch reads MVIIMVIAFLICWVPYASVAFY. Topologically, residues 275-286 are extracellular; the sequence is IFTHQGSDFGPI. Position 279 (Gln279) interacts with Zn(2+). A helical membrane pass occupies residues 287–308; the sequence is LMTLPAFFAKSSAIYNPVIYIM. Lys296 carries the N6-(retinylidene)lysine modification. Topologically, residues 309–348 are cytoplasmic; sequence MNKQFRNCMLTTICCGKNPFGEEEGSTTASKTETSQVAPA. 2 S-palmitoyl cysteine lipidation sites follow: Cys322 and Cys323. The segment at 330-348 is interaction with SAG; the sequence is EEEGSTTASKTETSQVAPA. A Phosphoserine modification is found at Ser334. A phosphothreonine mark is found at Thr335 and Thr336. At Ser338 the chain carries Phosphoserine. A phosphothreonine mark is found at Thr340 and Thr342. A Phosphoserine modification is found at Ser343.

This sequence belongs to the G-protein coupled receptor 1 family. Opsin subfamily. In terms of assembly, homodimer. May form a complex composed of RHO, GRK1 and RCVRN in a Ca(2+)-dependent manner; RCVRN prevents the interaction between GRK1 and RHO. Interacts with GRK1. Interacts (phosphorylated form) with SAG. Interacts with GNAT1. Interacts with GNAT3. SAG and G-proteins compete for a common binding site. Interacts with PRCD; the interaction promotes PRCD stability. Forms a complex with ASAP1 and ARF4. Forms a complex with ASAP1, RAB11A, Rabin8/RAB3IP, ARF4 and RAB11FIP3; the complex regulates Golgi-to-cilia rhodopsin/RHO transport in photoreceptors. Post-translationally, phosphorylated on some or all of the serine and threonine residues present in the C-terminal region. In terms of processing, contains one covalently linked retinal chromophore. Upon light absorption, the covalently bound 11-cis-retinal is converted to all-trans-retinal. After hydrolysis of the Schiff base and release of the covalently bound all-trans-retinal, active rhodopsin is regenerated by binding of a fresh molecule of 11-cis-retinal.

Its subcellular location is the membrane. The protein localises to the cell projection. It localises to the cilium. It is found in the photoreceptor outer segment. In terms of biological role, photoreceptor required for image-forming vision at low light intensity. Required for photoreceptor cell viability after birth. Light-induced isomerization of 11-cis to all-trans retinal triggers a conformational change that activates signaling via G-proteins. Subsequent receptor phosphorylation mediates displacement of the bound G-protein alpha subunit by the arrestin SAG and terminates signaling. The sequence is that of Rhodopsin (RHO) from Loxodonta africana (African elephant).